Reading from the N-terminus, the 240-residue chain is UDP-2,3-diacylglucosamine hydrolase (240 aa).

D8, H10, D41, N79, and H114 together coordinate Mn(2+). 79-80 (NR) is a binding site for substrate. The substrate site is built by D122, S160, N164, K167, and H195. Positions 195 and 197 each coordinate Mn(2+).

This sequence belongs to the LpxH family. Mn(2+) serves as cofactor.

Its subcellular location is the cell inner membrane. It carries out the reaction UDP-2-N,3-O-bis[(3R)-3-hydroxytetradecanoyl]-alpha-D-glucosamine + H2O = 2-N,3-O-bis[(3R)-3-hydroxytetradecanoyl]-alpha-D-glucosaminyl 1-phosphate + UMP + 2 H(+). The protein operates within glycolipid biosynthesis; lipid IV(A) biosynthesis; lipid IV(A) from (3R)-3-hydroxytetradecanoyl-[acyl-carrier-protein] and UDP-N-acetyl-alpha-D-glucosamine: step 4/6. Hydrolyzes the pyrophosphate bond of UDP-2,3-diacylglucosamine to yield 2,3-diacylglucosamine 1-phosphate (lipid X) and UMP by catalyzing the attack of water at the alpha-P atom. Involved in the biosynthesis of lipid A, a phosphorylated glycolipid that anchors the lipopolysaccharide to the outer membrane of the cell. This chain is UDP-2,3-diacylglucosamine hydrolase, found in Proteus mirabilis (strain HI4320).